Here is a 363-residue protein sequence, read N- to C-terminus: Fructose-bisphosphate aldolase 2 (363 aa).

Position 61 (serine 61) interacts with D-glyceraldehyde 3-phosphate. Aspartate 109 (proton donor) is an active-site residue. Positions 110, 144, 174, and 226 each coordinate Zn(2+). Glycine 227 lines the dihydroxyacetone phosphate pocket. Residue histidine 264 participates in Zn(2+) binding. 265–267 (GGS) is a binding site for dihydroxyacetone phosphate.

Belongs to the class II fructose-bisphosphate aldolase family. Homodimer. Zn(2+) is required as a cofactor.

It carries out the reaction beta-D-fructose 1,6-bisphosphate = D-glyceraldehyde 3-phosphate + dihydroxyacetone phosphate. Its pathway is carbohydrate degradation; glycolysis; D-glyceraldehyde 3-phosphate and glycerone phosphate from D-glucose: step 4/4. Functionally, catalyzes the aldol condensation of dihydroxyacetone phosphate (DHAP or glycerone-phosphate) with glyceraldehyde 3-phosphate (G3P) to form fructose 1,6-bisphosphate (FBP) in gluconeogenesis and the reverse reaction in glycolysis. The sequence is that of Fructose-bisphosphate aldolase 2 (FBA2) from Paracoccidioides lutzii (strain ATCC MYA-826 / Pb01) (Paracoccidioides brasiliensis).